Here is a 327-residue protein sequence, read N- to C-terminus: Malate dehydrogenase (327 aa).

An NAD(+)-binding site is contributed by 11–17 (GAAGQIA). The substrate site is built by arginine 92 and arginine 98. NAD(+) is bound by residues asparagine 105, glutamine 112, and 128 to 130 (VGN). Asparagine 130 and arginine 160 together coordinate substrate. The Proton acceptor role is filled by histidine 185.

This sequence belongs to the LDH/MDH superfamily. MDH type 2 family.

The catalysed reaction is (S)-malate + NAD(+) = oxaloacetate + NADH + H(+). Catalyzes the reversible oxidation of malate to oxaloacetate. The chain is Malate dehydrogenase from Magnetococcus marinus (strain ATCC BAA-1437 / JCM 17883 / MC-1).